We begin with the raw amino-acid sequence, 668 residues long: Nuclear pore complex protein Nup75 (668 aa).

This sequence belongs to the nucleoporin Nup85 family. As to quaternary structure, component of the nuclear pore complex (NPC). Component of the NPC Nup107-160 subcomplex.

Its subcellular location is the nucleus. It is found in the nuclear pore complex. It localises to the nucleus membrane. Component of the nuclear pore complex (NPC) that seems to be required for NPC assembly and maintenance. Required for nuclear import of phosphorylated Mad via importin msk. Has no role in classical nuclear localization signal (cNLS)-dependent nuclear import via importin-beta. Facilitates the interaction between Nup93 and sec13 with msk. The protein is Nuclear pore complex protein Nup75 of Drosophila melanogaster (Fruit fly).